Consider the following 373-residue polypeptide: DNA replication and repair protein RecF (373 aa).

ATP is bound at residue 30 to 37 (GANGSGKT).

This sequence belongs to the RecF family.

The protein resides in the cytoplasm. In terms of biological role, the RecF protein is involved in DNA metabolism; it is required for DNA replication and normal SOS inducibility. RecF binds preferentially to single-stranded, linear DNA. It also seems to bind ATP. The chain is DNA replication and repair protein RecF from Marinobacter nauticus (strain ATCC 700491 / DSM 11845 / VT8) (Marinobacter aquaeolei).